The sequence spans 183 residues: Probable chemoreceptor glutamine deamidase CheD (183 aa).

It belongs to the CheD family.

It carries out the reaction L-glutaminyl-[protein] + H2O = L-glutamyl-[protein] + NH4(+). Probably deamidates glutamine residues to glutamate on methyl-accepting chemotaxis receptors (MCPs), playing an important role in chemotaxis. The chain is Probable chemoreceptor glutamine deamidase CheD from Sinorhizobium medicae (strain WSM419) (Ensifer medicae).